The chain runs to 239 residues: Pyridoxine 5'-phosphate synthase (239 aa).

N7 provides a ligand contact to 3-amino-2-oxopropyl phosphate. A 1-deoxy-D-xylulose 5-phosphate-binding site is contributed by D9–H10. R18 contributes to the 3-amino-2-oxopropyl phosphate binding site. Catalysis depends on H43, which acts as the Proton acceptor. Residues R45 and H50 each contribute to the 1-deoxy-D-xylulose 5-phosphate site. The active-site Proton acceptor is the E70. A 1-deoxy-D-xylulose 5-phosphate-binding site is contributed by T100. The active-site Proton donor is the H191. Residues G192 and G213–H214 each bind 3-amino-2-oxopropyl phosphate.

Belongs to the PNP synthase family. As to quaternary structure, homooctamer; tetramer of dimers.

The protein resides in the cytoplasm. The enzyme catalyses 3-amino-2-oxopropyl phosphate + 1-deoxy-D-xylulose 5-phosphate = pyridoxine 5'-phosphate + phosphate + 2 H2O + H(+). It functions in the pathway cofactor biosynthesis; pyridoxine 5'-phosphate biosynthesis; pyridoxine 5'-phosphate from D-erythrose 4-phosphate: step 5/5. Functionally, catalyzes the complicated ring closure reaction between the two acyclic compounds 1-deoxy-D-xylulose-5-phosphate (DXP) and 3-amino-2-oxopropyl phosphate (1-amino-acetone-3-phosphate or AAP) to form pyridoxine 5'-phosphate (PNP) and inorganic phosphate. This chain is Pyridoxine 5'-phosphate synthase, found in Pelobacter propionicus (strain DSM 2379 / NBRC 103807 / OttBd1).